The sequence spans 270 residues: tRNA pseudouridine synthase A (270 aa).

Catalysis depends on D51, which acts as the Nucleophile. Position 109 (Y109) interacts with substrate.

It belongs to the tRNA pseudouridine synthase TruA family. In terms of assembly, homodimer.

It catalyses the reaction uridine(38/39/40) in tRNA = pseudouridine(38/39/40) in tRNA. In terms of biological role, formation of pseudouridine at positions 38, 39 and 40 in the anticodon stem and loop of transfer RNAs. The polypeptide is tRNA pseudouridine synthase A (Variovorax paradoxus (strain S110)).